A 311-amino-acid polypeptide reads, in one-letter code: Terpentetriene synthase (311 aa).

The DDXXD motif signature appears at aspartate 77–aspartate 81.

It belongs to the terpene synthase family. Homodimer. It depends on Mg(2+) as a cofactor.

The enzyme catalyses terpentedienyl diphosphate = terpentetriene + diphosphate. It participates in antibiotic biosynthesis. In terms of biological role, involved in the production of the isoprenoid antibiotic terpentecin. Converts terpentedienol diphosphate (TDP) into terpentetriene (TTE). Can also accept geranylgeranyl diphosphate (GGDP) and farnesyl diphosphate (FDP) as substrates. This is Terpentetriene synthase (cyc2) from Kitasatospora griseola (Streptomyces griseolosporeus).